A 106-amino-acid chain; its full sequence is uncharacterized protein (106 aa).

A run of 2 helical transmembrane segments spans residues 53–70 (LLLL…LDII) and 74–93 (ILGL…WTLI).

It localises to the cell membrane. This is an uncharacterized protein from Bacillus subtilis (strain 168).